Here is a 283-residue protein sequence, read N- to C-terminus: Probable voltage-dependent anion-selective channel (283 aa).

This sequence belongs to the eukaryotic mitochondrial porin family.

It localises to the mitochondrion outer membrane. In terms of biological role, forms a channel through the cell membrane that allows diffusion of small hydrophilic molecules. Plays a role in maintaining mitochondrial morphology. The protein is Probable voltage-dependent anion-selective channel of Caenorhabditis elegans.